The sequence spans 498 residues: Protein YhjJ (498 aa).

A signal peptide spans 1 to 24; sequence MQGTKIRLLAGGLLMMATAGYVQA.

This sequence belongs to the peptidase M16 family.

It localises to the periplasm. This chain is Protein YhjJ (yhjJ), found in Escherichia coli (strain K12).